Here is an 87-residue protein sequence, read N- to C-terminus: Cobalt transport protein CbiN (87 aa).

Helical transmembrane passes span 4–24 (LLLL…EWAG) and 58–78 (MLFS…LGYY).

The protein belongs to the CbiN family. As to quaternary structure, forms an energy-coupling factor (ECF) transporter complex composed of an ATP-binding protein (A component, CbiO), a transmembrane protein (T component, CbiQ) and 2 possible substrate-capture proteins (S components, CbiM and CbiN) of unknown stoichimetry.

It is found in the cell membrane. It functions in the pathway cofactor biosynthesis; adenosylcobalamin biosynthesis. Part of the energy-coupling factor (ECF) transporter complex CbiMNOQ involved in cobalt import. The sequence is that of Cobalt transport protein CbiN from Archaeoglobus fulgidus (strain ATCC 49558 / DSM 4304 / JCM 9628 / NBRC 100126 / VC-16).